A 310-amino-acid chain; its full sequence is Probable mitochondrial import receptor subunit TOM40-2 (310 aa).

Met-1 carries the N-acetylmethionine modification.

The protein belongs to the Tom40 family. Forms part of the preprotein translocase complex of the outer mitochondrial membrane (TOM complex) which consists of at least 6 different proteins (TOM5, TOM6, TOM7, TOM20, TOM22/TOM9 and TOM40). Present in a large lipid-enriched complex called mitochondrial transmembrane lipoprotein (MTL) complex made of proteins located in the two mitochondrial membranes, including the TOM complex and the core components of the MICOS complex and containing at least digalactosyldiacylglycerol (DGDG). Binds to MIC60. Component of a mitochondrial large protein complex that contains, at least, MIC60, DGS1, TOM40, TOM20 proteins, and petC/RISP. Expressed in roots, flowers, young cotyledons and leaves.

The protein resides in the mitochondrion outer membrane. Functionally, central component of the receptor complex responsible for the recognition and translocation of cytosolically synthesized mitochondrial preproteins. Together with TOM22 functions as the transit peptide receptor at the surface of the mitochondrion outer membrane and facilitates the movement of preproteins into the translocation pore. Directly involved in the pore formation. In Arabidopsis thaliana (Mouse-ear cress), this protein is Probable mitochondrial import receptor subunit TOM40-2.